A 354-amino-acid chain; its full sequence is Phosphate acyltransferase (354 aa).

The protein belongs to the PlsX family. Homodimer. Probably interacts with PlsY.

The protein localises to the cytoplasm. The catalysed reaction is a fatty acyl-[ACP] + phosphate = an acyl phosphate + holo-[ACP]. Its pathway is lipid metabolism; phospholipid metabolism. In terms of biological role, catalyzes the reversible formation of acyl-phosphate (acyl-PO(4)) from acyl-[acyl-carrier-protein] (acyl-ACP). This enzyme utilizes acyl-ACP as fatty acyl donor, but not acyl-CoA. This is Phosphate acyltransferase from Bordetella petrii (strain ATCC BAA-461 / DSM 12804 / CCUG 43448).